Here is a 441-residue protein sequence, read N- to C-terminus: Chromosome partition protein MukF (441 aa).

A leucine-zipper region spans residues 208 to 236 (LTETSSTLRELQDTLEAAGDKLQTSLLSI).

The protein belongs to the MukF family. As to quaternary structure, interacts, and probably forms a ternary complex, with MukE and MukB via its C-terminal region. The complex formation is stimulated by calcium or magnesium. It is required for an interaction between MukE and MukB.

It localises to the cytoplasm. It is found in the nucleoid. Functionally, involved in chromosome condensation, segregation and cell cycle progression. May participate in facilitating chromosome segregation by condensation DNA from both sides of a centrally located replisome during cell division. Not required for mini-F plasmid partitioning. Probably acts via its interaction with MukB and MukE. Overexpression results in anucleate cells. It has a calcium binding activity. This Pectobacterium atrosepticum (strain SCRI 1043 / ATCC BAA-672) (Erwinia carotovora subsp. atroseptica) protein is Chromosome partition protein MukF.